Reading from the N-terminus, the 453-residue chain is MQAPSVHQHVAFTEEIGDLPDGSSYMIRVPENWNGVLIRDLDLVSGTSNSNAARYETMLKEGFAVAGTARHPLRQWQYDPAHEIENLNHVLDTFEENYGSPERVIQYGCSGGAHVSLAVAEDFSDRVDGSVALAAHTPVWIMNSFLDGWFSLQSLIGEYYVEAGHGPLSDLAITKLPNDGSSNSSGHGMEGDLPAAWRNAFTAANATPEGRARMALAFALGQWSPWLADNTPQPDLDDPEAIADSVYESAMRLAGSPGGEARIMFENAARGQQLSWNDDIDYADFWENSNPAMKSAVQELYDTAGLDLQSDIETVNSQPRIEASQYALDYWNTPGRNVIGDPEVPVLRLHMIGDYQIPYSLVQGYSDLISENNNDDLYRTAFVQSTGHCNFTAAESSAAIEVMMQRLDTGEWPSTEPDDLNAIAEASNTGTEARFMALDGWEIPEYNRTWKPE.

Monomer. In terms of processing, the N-terminus is blocked.

It carries out the reaction a phtalamide + H2O = phthalate + a primary amine. Inhibited by iodoacetate, p-hydroxymercuric benzoate and copper ions. Catalyzes the removal of the phthalyl group from phthalyl amides generating phthalate and an amine. The enzyme has a broad substrate specificity and hydrolyzes phthalylated amino acids, peptides, beta-lactams, aromatic and aliphatic amines; substitutions allowed on the phthalyl group include 6-F, 6-NH(2), 3-OH, and a nitrogen in the aromatic ring ortho to the carboxy group attached to the amine. This Xanthobacter agilis protein is o-phthalyl amidase.